Here is a 210-residue protein sequence, read N- to C-terminus: MKRNGILFVISAPSGAGKTSLCRQIVDIFPDMRHSISFTTRPRRNGETDGVDYHFVTPEVFDTMVAEGAFAEWARVHGNCYGTALATLQEAREQGQDLLLDIDCQGAAQLKRNCPDDVFIFILPPSFEELERRLRGRNTDTAEVIARRLDNARREIRELVWYDYLIVNEDLPRAVEEFKSIILAEGCRASRIRSEAGRLFDIDMQDNSTI.

Positions glycine 5–leucine 183 constitute a Guanylate kinase-like domain. Position 12–19 (alanine 12–threonine 19) interacts with ATP.

The protein belongs to the guanylate kinase family.

The protein localises to the cytoplasm. The enzyme catalyses GMP + ATP = GDP + ADP. Its function is as follows. Essential for recycling GMP and indirectly, cGMP. This chain is Guanylate kinase, found in Syntrophotalea carbinolica (strain DSM 2380 / NBRC 103641 / GraBd1) (Pelobacter carbinolicus).